The following is a 180-amino-acid chain: uncharacterized protein (180 aa).

Residues 3-33 (QQQSNNSNDNKEQLDRVIESLNRVNSETKQI) adopt a coiled-coil conformation.

This is an uncharacterized protein from Acanthamoeba polyphaga (Amoeba).